Reading from the N-terminus, the 496-residue chain is Cytochrome P450 71B1 (496 aa).

Cys-436 provides a ligand contact to heme.

It belongs to the cytochrome P450 family. It depends on heme as a cofactor.

The polypeptide is Cytochrome P450 71B1 (CYP71B1) (Thlaspi arvense (Field penny-cress)).